We begin with the raw amino-acid sequence, 115 residues long: NADH-ubiquinone oxidoreductase chain 3 (115 aa).

3 helical membrane-spanning segments follow: residues 3 to 23 (LILM…IVAF), 56 to 76 (FFLV…LLPL), and 84 to 104 (PTLM…GLIY).

The protein belongs to the complex I subunit 3 family.

It is found in the mitochondrion membrane. It carries out the reaction a ubiquinone + NADH + 5 H(+)(in) = a ubiquinol + NAD(+) + 4 H(+)(out). Its function is as follows. Core subunit of the mitochondrial membrane respiratory chain NADH dehydrogenase (Complex I) that is believed to belong to the minimal assembly required for catalysis. Complex I functions in the transfer of electrons from NADH to the respiratory chain. The immediate electron acceptor for the enzyme is believed to be ubiquinone. This is NADH-ubiquinone oxidoreductase chain 3 (MT-ND3) from Polypterus ornatipinnis (Ornate bichir).